The following is a 334-amino-acid chain: Serine/threonine-protein kinase SAPK3 (334 aa).

The Protein kinase domain occupies 5-261 (YEALKELGAG…IPEIKKHTWF (257 aa)). Residues 11 to 19 (LGAGNFGVA) and lysine 34 contribute to the ATP site. Catalysis depends on aspartate 124, which acts as the Proton acceptor.

Belongs to the protein kinase superfamily. Ser/Thr protein kinase family. In terms of processing, autophosphorylated in presence of Ca(2+). In terms of tissue distribution, expressed in leaves and maturing seeds, but not in roots and stems of field-grown plants.

It localises to the cytoplasm. Its subcellular location is the nucleus. The catalysed reaction is L-seryl-[protein] + ATP = O-phospho-L-seryl-[protein] + ADP + H(+). It carries out the reaction L-threonyl-[protein] + ATP = O-phospho-L-threonyl-[protein] + ADP + H(+). Activated by phosphorylation. In terms of biological role, may play a role in signal transduction of hyperosmotic response. The chain is Serine/threonine-protein kinase SAPK3 (SAPK3) from Oryza sativa subsp. indica (Rice).